Reading from the N-terminus, the 206-residue chain is Probable N-acetyltransferase 14 (206 aa).

The N-acetyltransferase domain maps to 9–206; that stretch reads LSVREMREEE…TIVQEFRKDI (198 aa). 2 helical membrane-spanning segments follow: residues 37–57 and 60–80; these read LILY…ASSG and FILN…IVGL.

Belongs to the camello family.

The protein resides in the membrane. In terms of biological role, probable acetyltransferase. In Xenopus tropicalis (Western clawed frog), this protein is Probable N-acetyltransferase 14 (nat14).